We begin with the raw amino-acid sequence, 2494 residues long: Nuclear receptor corepressor 1 (2494 aa).

The span at 1–33 (MSSSGYPPNQGAFSTEQGRYSSHPVQYTFPSSR) shows a compositional bias: polar residues. 4 disordered regions span residues 1–38 (MSSS…QQEF), 53–106 (LLQQ…PRLD), 134–170 (SEVK…KLSK), and 198–222 (QQQL…PVEQ). The span at 71 to 82 (PVSDRPQDRRQG) shows a compositional bias: basic and acidic residues. A compositionally biased stretch (polar residues) spans 83-92 (YEQQYHSVTQ). Composition is skewed to basic and acidic residues over residues 93-106 (NEHE…PRLD), 134-148 (SEVK…KHET), and 204-213 (EAAKPPEPEK). The segment at 154–304 (SGQPGEEQEA…REQNICQRYD (151 aa)) is interaction with tbl1xr1. A coiled-coil region spans residues 168–208 (LSKEELIQSMDRVDREIAKVEQQILKLKKKQQQLEEEAAKP). Positions 427-478 (QFMNVWTDHEKEIFKEKFVQHPKNFGLIASYLERKTVSDCVLYYYLTKKNEN) constitute an SANT 1 domain. 8 disordered regions span residues 488–638 (PKRR…VEHG), 671–913 (NLLQ…LDSK), 981–1007 (RQRQ…PNMD), 1081–1124 (GARL…GTPG), 1413–1434 (IHEI…ESSR), 1488–1585 (MGER…TQRE), 1745–1845 (LAFP…QESI), and 1912–1987 (EVVK…AHTK). Composition is skewed to basic and acidic residues over residues 502–525 (AQEE…KEEE) and 535–548 (KEEL…RTDA). A coiled-coil region spans residues 502 to 549 (AQEEKEIEKVEEEKAERNDKKEEERREEEEKEEKEELRDGTKDRTDAI). Positions 582–616 (ASEAAAAANAASTATTAPATTTSTTATTTTAALVP) are enriched in low complexity. Over residues 617–629 (VAPPPEEPTPPPT) the composition is skewed to pro residues. Residues 622–668 (EEPTPPPTQEQSLVEHGRNWGAIAKMVGSKSESQCKNFYFNYKRRHN) enclose the SANT 2 domain. The segment covering 692 to 702 (QCESVASTVSA) has biased composition (polar residues). Residues 698–726 (STVSAQEDEENEASNEEENAEDSEGAENS) are a coiled coil. Positions 703–722 (QEDEENEASNEEENAEDSEG) are enriched in acidic residues. The segment covering 723–741 (AENSSDTESAPSPSPAEAA) has biased composition (low complexity). Positions 766-779 (ASKSVSDSSPTPTV) are enriched in polar residues. Residues 829–864 (AEPDEVESKPSESAEVKIEEDTKDQDMERLMDRAEA) are compositionally biased toward basic and acidic residues. Polar residues-rich tracts occupy residues 881–892 (ESQSDNDSSATC), 993–1004 (MSASPGNMSKSP), and 1104–1124 (ATSS…GTPG). Positions 1488 to 1504 (MGERSKYEDTKSSEAIR) are enriched in basic and acidic residues. Residues 1508-1519 (TSVVSSGPSVLR) are compositionally biased toward polar residues. Over residues 1548–1561 (PSPMSRSSPMARSA) the composition is skewed to low complexity. Residues 1771-1810 (VSAERERERERDRERDREREKEQRERERDRERERERLAAA) are a coiled coil. The span at 1773-1807 (AERERERERDRERDREREKEQRERERDRERERERL) shows a compositional bias: basic and acidic residues. Over residues 1835-1845 (PSPSVRAQESI) the composition is skewed to polar residues. Basic and acidic residues predominate over residues 1914–1935 (VKPKEMKHDPARSEESLSRRNV). The span at 1953–1972 (QSPYTSSSFSGSKSQGQPSP) shows a compositional bias: low complexity. The span at 1978–1987 (AGKEKTAHTK) shows a compositional bias: basic and acidic residues. The short motif at 2008–2012 (IDVII) is the CORNR box 1 element. The tract at residues 2018–2105 (SDKDGRDRNS…PSPQQTIPGH (88 aa)) is disordered. Residues 2027 to 2036 (SQSSDSSSSH) are compositionally biased toward low complexity. The segment covering 2039–2048 (HRYDAPRDTI) has biased composition (basic and acidic residues). The span at 2088–2102 (RYRQQQESPSPQQTI) shows a compositional bias: polar residues. The CORNR box 2 signature appears at 2119 to 2123 (ICQII). Over residues 2135–2177 (QALQQPPASTFQSTNPSSTPVRTKASSRFSPESQVQPVHNQRP) the composition is skewed to polar residues. The tract at residues 2135–2216 (QALQQPPAST…YEPISPPQAP (82 aa)) is disordered. The segment covering 2186 to 2205 (VLDRPRGRPGKSPDRGHISE) has biased composition (basic and acidic residues). Residues 2322–2326 (LEDII) carry the CORNR box 3 motif. Disordered stretches follow at residues 2346–2413 (GVAQ…SVHS) and 2446–2494 (MLNS…DSDE). Positions 2376–2390 (HKQKLISKYGSRKTK) are enriched in basic residues. Composition is skewed to polar residues over residues 2446–2472 (MLNS…QQSR) and 2485–2494 (QYETLSDSDE).

Belongs to the N-CoR nuclear receptor corepressors family. As to quaternary structure, forms a large corepressor complex that contains sin3a/b, histone deacetylases hdac1 and hdac2, rbbp4 and possibly rbbp7. Interacts with the thyroid receptor (TR, composed of rxra and thrb) and the retinoid acid receptor (RAR, composed of rxra and rara) in the absence of ligand. Interacts with tbl1xr1. Interacts with zbtb33/kaiso.

The protein localises to the nucleus. In terms of biological role, mediates transcriptional repression by certain nuclear receptors. Participates in complexes which promote histone deacetylation and the formation of repressive chromatin structures which may impede access by the basal transcription machinery. In association with hdac3, may play a role in the regulation of the circadian clock. The protein is Nuclear receptor corepressor 1 (ncor1) of Xenopus tropicalis (Western clawed frog).